The following is a 710-amino-acid chain: Choline transporter-like protein 5 (710 aa).

Positions 1–21 (MARKRKPPSSQGDPRRYDPDF) are disordered. Topologically, residues 1-32 (MARKRKPPSSQGDPRRYDPDFQGPTAKRTCTD) are cytoplasmic. The helical transmembrane segment at 33-53 (VLCCLIFLLFILGYVLLGLLA) threads the bilayer. Over 54–236 (WAHGDPRKMA…KLLEDYATSW (183 aa)) the chain is Extracellular. N-linked (GlcNAc...) asparagine glycosylation is found at asparagine 82 and asparagine 184. The helical transmembrane segment at 237–257 (KWILIGLTVAMALSWTFLILL) threads the bilayer. Topologically, residues 258–260 (RFT) are cytoplasmic. A helical transmembrane segment spans residues 261-281 (AGFLFWFFIFGVLGIIGYGIW). At 282–319 (YCFLEYSSIQQRPQSTFWMYGFGIQRRVNMFFHLKETW) the chain is on the extracellular side. A helical transmembrane segment spans residues 320-340 (FSMMIILSAIEIIIIIVLIFL). Residues 341–345 (RTRIQ) lie on the Cytoplasmic side of the membrane. Residues 346 to 366 (VAIILLQEGSKAISYLPSALI) form a helical membrane-spanning segment. At 367–368 (YP) the chain is on the extracellular side. The chain crosses the membrane as a helical span at residues 369 to 389 (VLTFILLSICISYWAVTAVFL). Over 390 to 454 (ATSGVPIFKV…NYILTFQVYN (65 aa)) the chain is Cytoplasmic. A helical membrane pass occupies residues 455-475 (LFAFLWLINFVIALGQCALAG). The Extracellular segment spans residues 476–509 (AFASYYWAMKKPDDIPPYPLFTAFGRAVRYHTGS). Residues 510-530 (LAFGSLILASVQMFKVIVEYL) form a helical membrane-spanning segment. Residues 531–604 (DRRLKKAQNS…KVTVTDEVTY (74 aa)) lie on the Cytoplasmic side of the membrane. Residues 605 to 625 (FVLLLGKVLVSGIVGVLAFLL) traverse the membrane as a helical segment. At 626-643 (FTERLQIIVDGPTTLNYY) the chain is on the extracellular side. The helical transmembrane segment at 644–664 (WVPFLTLVFGSYMIAHGFFSV) threads the bilayer. Over 665–710 (YSMCVETIFICFLEDLERNEGSPSRPYFVTPALMNILLEQGKIKKQ) the chain is Cytoplasmic.

It belongs to the CTL (choline transporter-like) family.

It localises to the cell membrane. The catalysed reaction is choline(out) + n H(+)(in) = choline(in) + n H(+)(out). Functionally, choline/H+ antiporter. The sequence is that of Choline transporter-like protein 5 (Slc44a5) from Mus musculus (Mouse).